The primary structure comprises 373 residues: NK1 transcription factor-related protein 1 (373 aa).

Disordered regions lie at residues 49 to 74, 149 to 231, and 281 to 328; these read ALPA…TVHR, SDFT…RRAR, and KWKK…SMHT. Over residues 53 to 63 the composition is skewed to basic and acidic residues; sequence ESRETSPRHEP. A compositionally biased stretch (polar residues) spans 168–177; sequence EESSALTGNN. Positions 196 to 210 are enriched in low complexity; it reads GQQTQQSSSNGQNHQ. Residues 227-286 constitute a DNA-binding region (homeobox); it reads PRRARTAFTYEQLVALENKFKSTRYLSVCERLNLALSLSLTETQVKIWFQNRRTKWKKQN. The segment covering 296–310 has biased composition (gly residues); that stretch reads SGGGGGNGPSNGLGG.

The protein belongs to the NK-1 homeobox family.

It localises to the nucleus. Functionally, may participate in the energy homeostasis regulation. In Danio rerio (Zebrafish), this protein is NK1 transcription factor-related protein 1.